A 537-amino-acid polypeptide reads, in one-letter code: Chaperonin GroEL 3 (537 aa).

Residues 30–33 (TLGP), 87–91 (DGTTT), G414, 480–482 (DAL), and D496 contribute to the ATP site.

The protein belongs to the chaperonin (HSP60) family. In terms of assembly, forms a cylinder of 14 subunits composed of two heptameric rings stacked back-to-back. Interacts with the co-chaperonin GroES.

It is found in the cytoplasm. It catalyses the reaction ATP + H2O + a folded polypeptide = ADP + phosphate + an unfolded polypeptide.. Together with its co-chaperonin GroES, plays an essential role in assisting protein folding. The GroEL-GroES system forms a nano-cage that allows encapsulation of the non-native substrate proteins and provides a physical environment optimized to promote and accelerate protein folding. The polypeptide is Chaperonin GroEL 3 (Acaryochloris marina (strain MBIC 11017)).